A 295-amino-acid polypeptide reads, in one-letter code: Bifunctional protein FolD (295 aa).

Residues Gly177–Ser179 and Ser202 contribute to the NADP(+) site.

This sequence belongs to the tetrahydrofolate dehydrogenase/cyclohydrolase family. Homodimer.

The catalysed reaction is (6R)-5,10-methylene-5,6,7,8-tetrahydrofolate + NADP(+) = (6R)-5,10-methenyltetrahydrofolate + NADPH. It catalyses the reaction (6R)-5,10-methenyltetrahydrofolate + H2O = (6R)-10-formyltetrahydrofolate + H(+). It participates in one-carbon metabolism; tetrahydrofolate interconversion. Catalyzes the oxidation of 5,10-methylenetetrahydrofolate to 5,10-methenyltetrahydrofolate and then the hydrolysis of 5,10-methenyltetrahydrofolate to 10-formyltetrahydrofolate. This Psychrobacter arcticus (strain DSM 17307 / VKM B-2377 / 273-4) protein is Bifunctional protein FolD.